We begin with the raw amino-acid sequence, 281 residues long: UPF0162 protein XF_1494 (281 aa).

2 TPR repeats span residues 193–226 (VRIL…VPNQ) and 227–260 (PEAL…YPST).

This sequence belongs to the UPF0162 family.

The chain is UPF0162 protein XF_1494 from Xylella fastidiosa (strain 9a5c).